A 560-amino-acid chain; its full sequence is Serine palmitoyltransferase 2 (560 aa).

The helical transmembrane segment at 65–85 threads the bilayer; it reads PMLVAVLTYVGYGVLTLFGYL. Lysine 377 carries the post-translational modification N6-(pyridoxal phosphate)lysine.

It belongs to the class-II pyridoxal-phosphate-dependent aminotransferase family. In terms of assembly, component of the serine palmitoyltransferase (SPT) complex, which is composed of SPTLC1, SPTLC2 or SPTLC3 and SPTSSA or SPTSSB. The heterodimer consisting of SPTLC1 and SPTLC2/SPTLC3 forms the catalytic core of the enzyme, while SPTSSA or SPTSSB subunits determine substrate specificity. SPT also interacts with ORMDL proteins, especially ORMDL3, which negatively regulate SPT activity in the presence of ceramides. Forms dimers of heterodimers with SPTLC1. Pyridoxal 5'-phosphate is required as a cofactor. Expressed in astrocytes.

The protein localises to the endoplasmic reticulum membrane. It catalyses the reaction L-serine + hexadecanoyl-CoA + H(+) = 3-oxosphinganine + CO2 + CoA. It carries out the reaction octadecanoyl-CoA + L-serine + H(+) = 3-oxoeicosasphinganine + CO2 + CoA. It participates in lipid metabolism; sphingolipid metabolism. With respect to regulation, SPT complex catalytic activity is negatively regulated by ORMDL proteins, including ORMDL3, in the presence of ceramides. This mechanism allows to maintain ceramide levels at sufficient concentrations for the production of complex sphingolipids, but which prevents the accumulation of ceramides to levels that trigger apoptosis. Its function is as follows. Component of the serine palmitoyltransferase multisubunit enzyme (SPT) that catalyzes the initial and rate-limiting step in sphingolipid biosynthesis by condensing L-serine and activated acyl-CoA (most commonly palmitoyl-CoA) to form long-chain bases. The SPT complex is composed of SPTLC1, SPTLC2 or SPTLC3 and SPTSSA or SPTSSB. Within this complex, the heterodimer consisting of SPTLC1 and SPTLC2/SPTLC3 forms the catalytic core. The composition of the serine palmitoyltransferase (SPT) complex determines the substrate preference. The SPTLC1-SPTLC2-SPTSSA complex shows a strong preference for C16-CoA substrate, while the SPTLC1-SPTLC3-SPTSSA isozyme uses both C14-CoA and C16-CoA as substrates, with a slight preference for C14-CoA. The SPTLC1-SPTLC2-SPTSSB complex shows a strong preference for C18-CoA substrate, while the SPTLC1-SPTLC3-SPTSSB isozyme displays an ability to use a broader range of acyl-CoAs, without apparent preference. Crucial for adipogenesis. The chain is Serine palmitoyltransferase 2 from Rattus norvegicus (Rat).